Here is a 601-residue protein sequence, read N- to C-terminus: MKHWIQENYKNRSWAGELNESQEGKQIVLFGWSFRFRDQGGVIFIDLRDRTGIIQVVARKELLGDSFTLAEKVRSEYVLAVRGTLKKRDLESINPRMQTGTIEVVLDQLEILNVAKTPPFSLDEFDEVSEELKLKYRYLDFRREELKNRMIKRHEFIFAIRNYLNKRKFVEIETPILNKSTPEGARDFLVPSRLNPNQFYALPQSPQIFKQILMVGGMERYFQIVKCFRDEDLRADRQPEFTQLDMEFSFVSQEEILSEIEGLVETIYKEVFNIQLSIPFPRMTYNTAMEEYGSDKPDLRFGMKLVDVSEIVKDCDFNVFAGAVKNGGTVKVVCVPGGSIISRKEIEDYTAWLNRDYKAKGLAYMKHGTEGLESTITKRFKKEELEAISKACGSKEGDMLFFGADEREIVNHSLGALRLKLSERFETPKENEINITWIVDFPMFEWNKDHKRWDALHHPFTSPSDESIPFFESMETLQKNAGNATAKAYDLVMNGVEIGGGSIRIHSKEIQNKVFQVLGINEEEAKEKFGFLLEALEFGAPPHGGLAFGIDRMLMLLTGGKSIRDVIAFPKTQKGLCLMSECPSPVEEKQLQELKIKLAKV.

Glu183 serves as a coordination point for L-aspartate. Positions 207–210 are aspartate; it reads QIFK. Arg229 is an L-aspartate binding site. ATP-binding positions include 229–231 and Gln238; that span reads RDE. His457 is a binding site for L-aspartate. An ATP-binding site is contributed by Glu497. Arg504 lines the L-aspartate pocket. 549 to 552 contacts ATP; the sequence is GIDR.

This sequence belongs to the class-II aminoacyl-tRNA synthetase family. Type 1 subfamily. As to quaternary structure, homodimer.

It localises to the cytoplasm. The catalysed reaction is tRNA(Asp) + L-aspartate + ATP = L-aspartyl-tRNA(Asp) + AMP + diphosphate. In terms of biological role, catalyzes the attachment of L-aspartate to tRNA(Asp) in a two-step reaction: L-aspartate is first activated by ATP to form Asp-AMP and then transferred to the acceptor end of tRNA(Asp). This Leptospira interrogans serogroup Icterohaemorrhagiae serovar copenhageni (strain Fiocruz L1-130) protein is Aspartate--tRNA ligase.